The primary structure comprises 369 residues: Tyrosine-protein phosphatase non-receptor type 5 (369 aa).

S49 bears the Phosphoserine; by PKA mark. T59 carries the phosphothreonine; by MAPK modification. S72 carries the phosphoserine; by MAPK modification. Residues 104–359 (LQAEFFEIPM…QFVHHAMSLY (256 aa)) enclose the Tyrosine-protein phosphatase domain. Substrate-binding positions include D265, 300–306 (CSAGIGR), and Q344. Catalysis depends on C300, which acts as the Phosphocysteine intermediate.

This sequence belongs to the protein-tyrosine phosphatase family. Non-receptor class subfamily. In terms of processing, phosphorylation at Ser-49 by PKA deactivates PTPN5. Phosphorylation at Thr-59 and Ser-72 by MAPKs stabilizes the phosphatase, dephosphorylation of these sites results in ubiquitin-mediated degradation of the active phosphatase. In terms of tissue distribution, expressed in the central nervous system except in the cerebellum. Enriched within the striatum relative to other brain areas.

It localises to the cytoplasm. It carries out the reaction O-phospho-L-tyrosyl-[protein] + H2O = L-tyrosyl-[protein] + phosphate. Functionally, may regulate the activity of several effector molecules involved in synaptic plasticity and neuronal cell survival, including MAPKs, Src family kinases and NMDA receptors. The sequence is that of Tyrosine-protein phosphatase non-receptor type 5 (Ptpn5) from Rattus norvegicus (Rat).